A 106-amino-acid polypeptide reads, in one-letter code: Glutaredoxin-1 (106 aa).

Ala2 is subject to N-acetylalanine. In terms of domain architecture, Glutaredoxin spans 3–106 (QAFVNSKIQP…TRLKQMGALQ (104 aa)). Lys9 is subject to N6-succinyllysine. Intrachain disulfides connect Cys23-Cys26 and Cys79-Cys83.

It belongs to the glutaredoxin family.

The protein resides in the cytoplasm. In terms of biological role, has a glutathione-disulfide oxidoreductase activity in the presence of NADPH and glutathione reductase. Reduces low molecular weight disulfides and proteins. This is Glutaredoxin-1 (GLRX) from Bos taurus (Bovine).